Consider the following 67-residue polypeptide: Mitotic-spindle organizing protein 1A (67 aa).

The protein belongs to the MOZART1 family. Part of the gamma-tubulin complex. Interacts with GIP1 and GCP3. Mostly expressed in siliques and flowers, and, to a lower extent, in leaves, roots and seedlings, with highest levels in young tissues, meristematic cells, and the vasculature.

Its subcellular location is the cytoplasm. The protein localises to the cytoskeleton. It is found in the microtubule organizing center. The protein resides in the spindle. It localises to the nucleus. Its subcellular location is the phragmoplast. The protein localises to the nucleus envelope. Its function is as follows. Required for gamma-tubulin complex recruitment to the microtubule organizing centers (MTOCs). During mitosis, modulates gamma-tubulin complex localization, spindle stability and chromosomal segregation. Necessary for gametophyte development and embryogenesis. The chain is Mitotic-spindle organizing protein 1A (GIP2) from Arabidopsis thaliana (Mouse-ear cress).